Reading from the N-terminus, the 483-residue chain is 6-phosphogluconate dehydrogenase, decarboxylating (483 aa).

Residues 10-15 (GLAVMG) and 33-35 (NRT) each bind NADP(+). An N6-acetyllysine modification is found at Lys38. Ser57 is subject to Phosphoserine. Position 59 is an N6-acetyllysine (Lys59). NADP(+) is bound by residues 75 to 77 (VKA) and Asn103. Substrate contacts are provided by residues Asn103 and 129-131 (SGG). Ser129 carries the phosphoserine modification. Residue Lys184 is the Proton acceptor of the active site. Residue 187–188 (HN) participates in substrate binding. The active-site Proton donor is the Glu191. Positions 192, 261, 288, 447, and 453 each coordinate substrate. 478–481 (SSSY) provides a ligand contact to NADP(+).

Belongs to the 6-phosphogluconate dehydrogenase family. Homodimer.

It is found in the cytoplasm. The enzyme catalyses 6-phospho-D-gluconate + NADP(+) = D-ribulose 5-phosphate + CO2 + NADPH. The protein operates within carbohydrate degradation; pentose phosphate pathway; D-ribulose 5-phosphate from D-glucose 6-phosphate (oxidative stage): step 3/3. Catalyzes the oxidative decarboxylation of 6-phosphogluconate to ribulose 5-phosphate and CO(2), with concomitant reduction of NADP to NADPH. This Mus musculus (Mouse) protein is 6-phosphogluconate dehydrogenase, decarboxylating (Pgd).